The primary structure comprises 265 residues: Glutamate racemase (265 aa).

Substrate contacts are provided by residues 12–13 and 44–45; these read DS and YG. Residue C75 is the Proton donor/acceptor of the active site. 76–77 contacts substrate; the sequence is NT. Residue C183 is the Proton donor/acceptor of the active site. 184–185 lines the substrate pocket; the sequence is TH.

The protein belongs to the aspartate/glutamate racemases family.

It catalyses the reaction L-glutamate = D-glutamate. It participates in cell wall biogenesis; peptidoglycan biosynthesis. In terms of biological role, provides the (R)-glutamate required for cell wall biosynthesis. This is Glutamate racemase from Carboxydothermus hydrogenoformans (strain ATCC BAA-161 / DSM 6008 / Z-2901).